The following is a 111-amino-acid chain: Phosphoribosyl-AMP cyclohydrolase (111 aa).

Position 80 (Asp80) interacts with Mg(2+). Cys81 is a binding site for Zn(2+). Asp82 and Asp84 together coordinate Mg(2+). Residues Cys97 and Cys104 each contribute to the Zn(2+) site.

Belongs to the PRA-CH family. In terms of assembly, homodimer. The cofactor is Mg(2+). Zn(2+) serves as cofactor.

The protein localises to the cytoplasm. It carries out the reaction 1-(5-phospho-beta-D-ribosyl)-5'-AMP + H2O = 1-(5-phospho-beta-D-ribosyl)-5-[(5-phospho-beta-D-ribosylamino)methylideneamino]imidazole-4-carboxamide. It participates in amino-acid biosynthesis; L-histidine biosynthesis; L-histidine from 5-phospho-alpha-D-ribose 1-diphosphate: step 3/9. Functionally, catalyzes the hydrolysis of the adenine ring of phosphoribosyl-AMP. The chain is Phosphoribosyl-AMP cyclohydrolase from Mycobacterium marinum (strain ATCC BAA-535 / M).